The primary structure comprises 413 residues: Serine hydroxymethyltransferase (413 aa).

(6S)-5,6,7,8-tetrahydrofolate contacts are provided by residues Leu-119 and 123 to 125 (GHL). Lys-228 carries the post-translational modification N6-(pyridoxal phosphate)lysine. (6S)-5,6,7,8-tetrahydrofolate is bound at residue 351 to 353 (SPF).

Belongs to the SHMT family. In terms of assembly, homodimer. Pyridoxal 5'-phosphate is required as a cofactor.

The protein localises to the cytoplasm. The enzyme catalyses (6R)-5,10-methylene-5,6,7,8-tetrahydrofolate + glycine + H2O = (6S)-5,6,7,8-tetrahydrofolate + L-serine. It functions in the pathway one-carbon metabolism; tetrahydrofolate interconversion. It participates in amino-acid biosynthesis; glycine biosynthesis; glycine from L-serine: step 1/1. Its function is as follows. Catalyzes the reversible interconversion of serine and glycine with tetrahydrofolate (THF) serving as the one-carbon carrier. This reaction serves as the major source of one-carbon groups required for the biosynthesis of purines, thymidylate, methionine, and other important biomolecules. Also exhibits THF-independent aldolase activity toward beta-hydroxyamino acids, producing glycine and aldehydes, via a retro-aldol mechanism. This chain is Serine hydroxymethyltransferase, found in Anoxybacillus flavithermus (strain DSM 21510 / WK1).